The sequence spans 1359 residues: DNA-directed RNA polymerase subunit beta (1359 aa).

This sequence belongs to the RNA polymerase beta chain family. The RNAP catalytic core consists of 2 alpha, 1 beta, 1 beta' and 1 omega subunit. When a sigma factor is associated with the core the holoenzyme is formed, which can initiate transcription.

It carries out the reaction RNA(n) + a ribonucleoside 5'-triphosphate = RNA(n+1) + diphosphate. DNA-dependent RNA polymerase catalyzes the transcription of DNA into RNA using the four ribonucleoside triphosphates as substrates. The chain is DNA-directed RNA polymerase subunit beta from Nitrosococcus oceani (strain ATCC 19707 / BCRC 17464 / JCM 30415 / NCIMB 11848 / C-107).